Consider the following 162-residue polypeptide: MVLKTELCRFSGQKIYPGKGIRFIRSDSQVFLFANSKCKRYFHNRLKPAKLCWTAMYRKQHKKDIHAEAAKKRRRTTKKPYSRSIVGATLEVIQKKRAEKPEVRDAAREAALREIKERIKKTKDEKKAKKAEVTKSQKSQGGKGAVQKGSKGPKLGGGGGKR.

2 disordered regions span residues 64 to 83 (DIHA…PYSR) and 117 to 162 (ERIK…GGKR). The segment covering 71 to 81 (KKRRRTTKKPY) has biased composition (basic residues). The segment covering 117 to 135 (ERIKKTKDEKKAKKAEVTK) has biased composition (basic and acidic residues).

It belongs to the eukaryotic ribosomal protein eL24 family.

The protein resides in the cytoplasm. The chain is Large ribosomal subunit protein eL24 (RPL24) from Hordeum vulgare (Barley).